The primary structure comprises 142 residues: Hemoglobin subunit alpha-1 (142 aa).

In terms of domain architecture, Globin spans 2-142; that stretch reads LLSADDKKHI…VSTVLTSKYR (141 aa). Residue histidine 59 participates in O2 binding. Histidine 88 lines the heme b pocket.

It belongs to the globin family. Heterotetramer of two alpha chains and two beta chains. In terms of tissue distribution, red blood cells.

Involved in oxygen transport from the lung to the various peripheral tissues. In Xenopus laevis (African clawed frog), this protein is Hemoglobin subunit alpha-1 (hba1).